The chain runs to 348 residues: 3-methyl-2-oxobutanoate dehydrogenase subunit beta (348 aa).

Thiamine diphosphate is bound by residues glutamate 51, 80 to 82 (LAE), glutamine 104, and 108 to 111 (FSYP). Substrate contacts are provided by residues 105-108 (FDGF) and histidine 151. Histidine 151 (proton acceptor) is an active-site residue.

As to quaternary structure, heteromer of E1 alpha (BkdA) and beta (BkdB) subunits. Part of the BCKADH complex, consisting of multiple copies of BkdA/BkdB (E1), BkdC (E2) and Lpd (E3). The cofactor is thiamine diphosphate.

The catalysed reaction is N(6)-[(R)-lipoyl]-L-lysyl-[protein] + 3-methyl-2-oxobutanoate + H(+) = N(6)-[(R)-S(8)-2-methylpropanoyldihydrolipoyl]-L-lysyl-[protein] + CO2. In terms of biological role, component of the branched-chain alpha-ketoacid dehydrogenase (BCKADH) complex, that catalyzes the overall conversion of branched-chain alpha-ketoacids to acyl-CoA and CO(2). The polypeptide is 3-methyl-2-oxobutanoate dehydrogenase subunit beta (bkdB) (Mycobacterium tuberculosis (strain CDC 1551 / Oshkosh)).